Here is a 545-residue protein sequence, read N- to C-terminus: Chaperonin GroEL 2 (545 aa).

ATP-binding positions include 29 to 32 (TLGP), 86 to 90 (DGTTT), Gly-413, 479 to 481 (NAA), and Asp-495.

Belongs to the chaperonin (HSP60) family. Forms a cylinder of 14 subunits composed of two heptameric rings stacked back-to-back. Interacts with the co-chaperonin GroES.

The protein resides in the cytoplasm. It carries out the reaction ATP + H2O + a folded polypeptide = ADP + phosphate + an unfolded polypeptide.. Together with its co-chaperonin GroES, plays an essential role in assisting protein folding. The GroEL-GroES system forms a nano-cage that allows encapsulation of the non-native substrate proteins and provides a physical environment optimized to promote and accelerate protein folding. This chain is Chaperonin GroEL 2, found in Prochlorococcus marinus (strain MIT 9312).